A 1118-amino-acid chain; its full sequence is DNA mismatch repair protein MSH1, mitochondrial (1118 aa).

768-775 (GPNGGGKS) contacts ATP.

This sequence belongs to the DNA mismatch repair MutS family.

It localises to the mitochondrion. The protein localises to the plastid. Its subcellular location is the chloroplast. Functionally, DNA mismatch repair protein specifically involved in maintenance of mitochondrial genome configuration by controlling specific rearranged portion. Functions by suppressing asymmetric recombination at some repeat pairs. This chain is DNA mismatch repair protein MSH1, mitochondrial (MSH1), found in Arabidopsis thaliana (Mouse-ear cress).